Here is a 215-residue protein sequence, read N- to C-terminus: Cytochrome b6 (215 aa).

The helical transmembrane segment at 32-52 (IFYCLGGIVFVSFLIQVATGF) threads the bilayer. Cys35 contributes to the heme c binding site. The heme b site is built by His86 and His100. The next 3 helical transmembrane spans lie at 90-110 (VSMMVLMMILHVFRVYLTGGF), 116-136 (LTWVTGVILGVLTVSFGVTGY), and 186-206 (LHTFVLPLLTAVFMLMHFLMI). Residues His187 and His202 each contribute to the heme b site.

The protein belongs to the cytochrome b family. PetB subfamily. The 4 large subunits of the cytochrome b6-f complex are cytochrome b6, subunit IV (17 kDa polypeptide, PetD), cytochrome f and the Rieske protein, while the 4 small subunits are PetG, PetL, PetM and PetN. The complex functions as a dimer. It depends on heme b as a cofactor. Heme c serves as cofactor.

It localises to the plastid. It is found in the chloroplast thylakoid membrane. Functionally, component of the cytochrome b6-f complex, which mediates electron transfer between photosystem II (PSII) and photosystem I (PSI), cyclic electron flow around PSI, and state transitions. The protein is Cytochrome b6 of Pyropia yezoensis (Susabi-nori).